A 489-amino-acid polypeptide reads, in one-letter code: N-succinylglutamate 5-semialdehyde dehydrogenase (489 aa).

216–221 is a binding site for NAD(+); that stretch reads GSAATG. Active-site residues include E239 and C273.

It belongs to the aldehyde dehydrogenase family. AstD subfamily.

It carries out the reaction N-succinyl-L-glutamate 5-semialdehyde + NAD(+) + H2O = N-succinyl-L-glutamate + NADH + 2 H(+). It participates in amino-acid degradation; L-arginine degradation via AST pathway; L-glutamate and succinate from L-arginine: step 4/5. Functionally, catalyzes the NAD-dependent reduction of succinylglutamate semialdehyde into succinylglutamate. The chain is N-succinylglutamate 5-semialdehyde dehydrogenase from Erwinia tasmaniensis (strain DSM 17950 / CFBP 7177 / CIP 109463 / NCPPB 4357 / Et1/99).